A 648-amino-acid polypeptide reads, in one-letter code: Shugoshin (648 aa).

2 coiled-coil regions span residues 95-122 (LMIK…RLSV) and 208-273 (DDRA…KDEA). Disordered stretches follow at residues 188–239 (KVVG…RSSR), 262–334 (EADK…QEDA), 367–443 (VYRD…RPRR), 483–518 (TNRK…AAED), and 628–648 (HRAR…KVST). Basic and acidic residues-rich tracts occupy residues 200–217 (VRGE…HQEA) and 262–273 (EADKSRSAKDEA). Over residues 306 to 315 (ASGTLTQSNE) the composition is skewed to polar residues. 2 stretches are compositionally biased toward basic and acidic residues: residues 424–440 (IVVD…DATR) and 490–509 (QREG…HEQD).

The protein belongs to the shugoshin family.

Its subcellular location is the nucleus. The protein localises to the chromosome. It is found in the centromere. Functionally, plays a central role in chromosome cohesion during cell division by preventing premature dissociation of cohesin complex from centromeres after prophase, when most of cohesin complex dissociates from chromosomes arms. May act by protecting RAD21 and or REC8 from cleavage by ESP1/separase. This chain is Shugoshin (SGO1), found in Eremothecium gossypii (strain ATCC 10895 / CBS 109.51 / FGSC 9923 / NRRL Y-1056) (Yeast).